Here is a 1020-residue protein sequence, read N- to C-terminus: C protein alpha-antigen (1020 aa).

A signal peptide spans 1–41 (MFRRSKNNSYDTSQTKQRFSIKKFKFGAASVLIGLSFLGGV). The 9 X 82 AA tandem repeats stretch occupies residues 227-964 (VPDKDKYDPT…EVTVHVTPKP (738 aa)). 16 disordered regions span residues 261–281 (DGSK…VPGD), 306–330 (PKPV…GTPV), 342–363 (PDGS…VPGD), 388–445 (PKPV…VPGD), 470–494 (PKPV…GTPV), 506–527 (PDGS…VPGD), 552–576 (PKPV…GTPV), 588–610 (PDGS…PGDH), 634–658 (PKPV…GTPV), 670–692 (PDGS…PGDH), 716–740 (PKPV…GTPV), 752–774 (PDGS…PGDH), 798–822 (PKPV…GTPV), 834–856 (PDGS…PGDH), 880–904 (PKPV…GTPV), and 962–989 (PKPV…KLPA). A compositionally biased stretch (basic and acidic residues) spans 272–281 (DRPDTNVPGD). The segment covering 320–329 (GETTVPQGTP) has biased composition (polar residues). The segment covering 354 to 363 (DRPDTNVPGD) has biased composition (basic and acidic residues). Residues 402–411 (GETTVPQGTP) are compositionally biased toward polar residues. A compositionally biased stretch (basic and acidic residues) spans 436 to 445 (DRPDTNVPGD). Residues 484-493 (GETTVPQGTP) show a composition bias toward polar residues. Over residues 518–527 (DRPDTNVPGD) the composition is skewed to basic and acidic residues. The span at 566 to 575 (GETTVPQGTP) shows a compositional bias: polar residues. Basic and acidic residues predominate over residues 600-610 (DRPDTNVPGDH). The span at 648–657 (GETTVPQGTP) shows a compositional bias: polar residues. Over residues 682-692 (DRPDTNVPGDH) the composition is skewed to basic and acidic residues. Positions 730 to 739 (GETTVPQGTP) are enriched in polar residues. The segment covering 764–774 (DRPDTNVPGDH) has biased composition (basic and acidic residues). Residues 812–821 (GETTVPQGTP) are compositionally biased toward polar residues. Basic and acidic residues predominate over residues 846–856 (DRPDTNVPGDH). Positions 894–903 (GETTVPQGTP) are enriched in polar residues. The short motif at 987–991 (LPATG) is the LPXTG sorting signal element. At threonine 990 the chain carries Pentaglycyl murein peptidoglycan amidated threonine. A propeptide spans 991 to 1020 (GENATPFFNVAALTIISSVGLLSVSKKKED) (removed by sortase).

It localises to the secreted. The protein localises to the cell wall. Its function is as follows. May play a role in both virulence and immunity. This is C protein alpha-antigen (bca) from Streptococcus agalactiae serotype Ia (strain ATCC 27591 / A909 / CDC SS700).